Reading from the N-terminus, the 110-residue chain is MFILVSVVNICTYIHLHMFPLISTFTSIGLGVLMKDKGKEGKTIKAQNVTYQTFEKYVESSSFFFLVHNFLNSSTMKTLLLMSNNNSISEIPSFSVLKILWKNGIYIAHI.

The chain crosses the membrane as a helical span at residues 18 to 34 (MFPLISTFTSIGLGVLM).

The protein localises to the membrane. This is an uncharacterized protein from Saccharomyces cerevisiae (strain ATCC 204508 / S288c) (Baker's yeast).